The primary structure comprises 266 residues: Apolipoprotein A-I (266 aa).

The N-terminal stretch at 1–18 is a signal peptide; it reads MKAVVLTLAVLFLTGSQA. 2 repeat units span residues 67 to 88 and 89 to 110. The 10 X approximate tandem repeats stretch occupies residues 67 to 266; the sequence is LKLLDNWDSL…EEASKKLNAQ (200 aa). Residue M109 is modified to Methionine sulfoxide. One copy of the 3; half-length repeat lies at 111 to 121; sequence KDVEEMKTKVQ. A run of 5 repeats spans residues 122 to 143, 144 to 165, 166 to 187, 188 to 209, and 210 to 231. A 9; half-length repeat occupies 232-242; the sequence is PALEDLRQGLL. Repeat unit 10 spans residues 243 to 266; that stretch reads PVLESFKVSLLSALEEASKKLNAQ.

This sequence belongs to the apolipoprotein A1/A4/E family. In terms of assembly, homodimer. Interacts with APOA1BP and CLU. Component of a sperm activating protein complex (SPAP), consisting of APOA1, an immunoglobulin heavy chain, an immunoglobulin light chain and albumin. Interacts with NDRG1. Interacts with SCGB3A2. Interacts with NAXE and YJEFN3. Post-translationally, glycosylated. In terms of processing, palmitoylated. Phosphorylation sites are present in the extracellular medium. Major protein of plasma HDL, also found in chylomicrons.

It localises to the secreted. Its function is as follows. Participates in the reverse transport of cholesterol from tissues to the liver for excretion by promoting cholesterol efflux from tissues and by acting as a cofactor for the lecithin cholesterol acyltransferase (LCAT). As part of the SPAP complex, activates spermatozoa motility. This Carlito syrichta (Philippine tarsier) protein is Apolipoprotein A-I (APOA1).